The following is a 232-amino-acid chain: Small ribosomal subunit protein uS3 (232 aa).

The KH type-2 domain occupies 39–107 (IRAFLKKKLY…EVNVNIKEER (69 aa)). The segment at 211 to 232 (GVQPEKTEEEAPKKTRRARRGK) is disordered. Positions 213 to 223 (QPEKTEEEAPK) are enriched in basic and acidic residues.

Belongs to the universal ribosomal protein uS3 family. In terms of assembly, part of the 30S ribosomal subunit. Forms a tight complex with proteins S10 and S14.

In terms of biological role, binds the lower part of the 30S subunit head. Binds mRNA in the 70S ribosome, positioning it for translation. This is Small ribosomal subunit protein uS3 from Campylobacter concisus (strain 13826).